The sequence spans 875 residues: Pyrogallol hydroxytransferase large subunit (875 aa).

The segment at 82 to 104 is disordered; sequence RKSFDPNGERNPQLRGAGLSKQD. Ser-175 provides a ligand contact to Mo-bis(molybdopterin guanine dinucleotide).

This sequence belongs to the prokaryotic molybdopterin-containing oxidoreductase family. Heterodimer of a large and a small subunit. It depends on Mo-bis(molybdopterin guanine dinucleotide) as a cofactor.

The catalysed reaction is 1,2,3,5-tetrahydroxybenzene + 1,2,3-trihydroxybenzene = 1,2,3,5-tetrahydroxybenzene + 1,3,5-trihydroxybenzene. Isomerization of pyrogallol to phloroglucin. The sequence is that of Pyrogallol hydroxytransferase large subunit (athL) from Pelobacter acidigallici.